The sequence spans 144 residues: Large ribosomal subunit protein uL15 (144 aa).

The interval Met-1 to Gly-52 is disordered. The span at Arg-21–Gly-31 shows a compositional bias: gly residues.

This sequence belongs to the universal ribosomal protein uL15 family. As to quaternary structure, part of the 50S ribosomal subunit.

In terms of biological role, binds to the 23S rRNA. The chain is Large ribosomal subunit protein uL15 from Haemophilus ducreyi (strain 35000HP / ATCC 700724).